A 310-amino-acid chain; its full sequence is Inner membrane protein YfdC (310 aa).

Residues 1–12 (MDNDKIDQHSDE) are compositionally biased toward basic and acidic residues. Residues 1–27 (MDNDKIDQHSDEIEVESEEKERGKKIE) form a disordered region. Residues 1 to 58 (MDNDKIDQHSDEIEVESEEKERGKKIEIDEDRLPSRAMAIHEHIRQDGEKELERDAMA) lie on the Cytoplasmic side of the membrane. Residues 59–81 (LLWSAIAAGLSMGASLLAKGIFQ) traverse the membrane as a helical segment. Over 82–90 (VELEGVPGS) the chain is Periplasmic. The helical transmembrane segment at 91–113 (FLLENLGYTFGFIIVIMARQQLF) threads the bilayer. Residues 114–133 (TENTVTAVLPVMQKPTMSNV) are Cytoplasmic-facing. Residues 134–156 (GLLIRLWGVVLLGNILGTGIAAW) traverse the membrane as a helical segment. The Periplasmic segment spans residues 157 to 186 (AFEYMPIFNEETRDAFVKIGMDVMKNTPSE). A helical transmembrane segment spans residues 187 to 206 (MFANAIISGWLIATMVWMFP). The Cytoplasmic portion of the chain corresponds to 207 to 212 (AAGAAK). The chain crosses the membrane as a helical span at residues 213-232 (IVVIILMTWLIALGDTTHIV). The Periplasmic portion of the chain corresponds to 233-251 (VGSVEILYLVFNGTLHWSD). A helical membrane pass occupies residues 252-274 (FIWPFALPTLAGNICGGTFIFAL). Residues 275-310 (MSHAQIRNDMSNKRKAEARQKAERAENIKKNYKNPA) are Cytoplasmic-facing. Over residues 291-303 (EARQKAERAENIK) the composition is skewed to basic and acidic residues. The interval 291–310 (EARQKAERAENIKKNYKNPA) is disordered.

Its subcellular location is the cell inner membrane. This is Inner membrane protein YfdC (yfdC) from Escherichia coli (strain K12).